The sequence spans 394 residues: uncharacterized protein (394 aa).

The next 11 membrane-spanning stretches (helical) occupy residues proline 10–alanine 30, phenylalanine 50–glycine 70, isoleucine 79–leucine 99, alanine 100–valine 120, threonine 138–alanine 158, valine 166–proline 186, leucine 218–leucine 238, phenylalanine 243–glycine 263, tryptophan 291–leucine 311, leucine 337–alanine 357, and glycine 364–tryptophan 384.

This sequence belongs to the major facilitator superfamily.

Its subcellular location is the cell inner membrane. This is an uncharacterized protein from Escherichia coli (strain K12).